A 186-amino-acid chain; its full sequence is MKKILVIVYPEMNDVEYTNVMVVFSFIKTIQTTCYHHSLKKITASNGVVEVNNIVNTINLSEFDAVYIPGGIGATKHLDKDEKLLKTINYFKVNNLYLFAICDTPNVLFKHGIITKDEIYSSFPNPNLVMSENRSTAKVTVANKLITARSAGCALEFATVIVCTFLKDNTLNELVHKRLFGSEIKD.

This is an uncharacterized protein from Mycoplasma genitalium (strain ATCC 33530 / DSM 19775 / NCTC 10195 / G37) (Mycoplasmoides genitalium).